We begin with the raw amino-acid sequence, 372 residues long: Queuine tRNA-ribosyltransferase (372 aa).

Catalysis depends on D89, which acts as the Proton acceptor. Substrate contacts are provided by residues 89 to 93 (DSGGF), D161, and G232. Positions 262–268 (GIGDLPS) are RNA binding. The active-site Nucleophile is the D281. The RNA binding; important for wobble base 34 recognition stretch occupies residues 286-290 (TKAAR). Residues C319, C321, C324, and H351 each coordinate Zn(2+).

This sequence belongs to the queuine tRNA-ribosyltransferase family. As to quaternary structure, homodimer. Within each dimer, one monomer is responsible for RNA recognition and catalysis, while the other monomer binds to the replacement base PreQ1. Requires Zn(2+) as cofactor.

The catalysed reaction is 7-aminomethyl-7-carbaguanine + guanosine(34) in tRNA = 7-aminomethyl-7-carbaguanosine(34) in tRNA + guanine. It participates in tRNA modification; tRNA-queuosine biosynthesis. Its function is as follows. Catalyzes the base-exchange of a guanine (G) residue with the queuine precursor 7-aminomethyl-7-deazaguanine (PreQ1) at position 34 (anticodon wobble position) in tRNAs with GU(N) anticodons (tRNA-Asp, -Asn, -His and -Tyr). Catalysis occurs through a double-displacement mechanism. The nucleophile active site attacks the C1' of nucleotide 34 to detach the guanine base from the RNA, forming a covalent enzyme-RNA intermediate. The proton acceptor active site deprotonates the incoming PreQ1, allowing a nucleophilic attack on the C1' of the ribose to form the product. After dissociation, two additional enzymatic reactions on the tRNA convert PreQ1 to queuine (Q), resulting in the hypermodified nucleoside queuosine (7-(((4,5-cis-dihydroxy-2-cyclopenten-1-yl)amino)methyl)-7-deazaguanosine). This Chlamydia trachomatis serovar A (strain ATCC VR-571B / DSM 19440 / HAR-13) protein is Queuine tRNA-ribosyltransferase.